We begin with the raw amino-acid sequence, 85 residues long: Conotoxin Lt28.5 (85 aa).

The N-terminal stretch at 1–21 is a signal peptide; that stretch reads MPKLEMMLLVLLILPLCYIDA. A propeptide spanning residues 22 to 40 is cleaved from the precursor; that stretch reads VGPPPPWNMEDEIIEHWQK.

The protein belongs to the conotoxin D superfamily. Contains 5 disulfide bonds. In terms of tissue distribution, expressed by the venom duct.

Its subcellular location is the secreted. Functionally, probable neurotoxin. This Conus litteratus (Lettered cone) protein is Conotoxin Lt28.5.